Here is a 1081-residue protein sequence, read N- to C-terminus: Mediator of RNA polymerase II transcription subunit 15 (1081 aa).

Serine 2 is subject to N-acetylserine. The segment at 25–49 (LQVLMDINTLNGGSSDTADKIRIHA) is interaction with GCN4. Residues 238-286 (QAQAQANNNNNGLPQNGNINNNINIPQQQQMQPPNSSANNNPLQQQSSQ) are disordered. Position 335 is a phosphoserine (serine 335). Tandem repeats lie at residues 422 to 423 (QA), 424 to 425 (QA), 426 to 427 (QA), 428 to 429 (QA), 430 to 431 (QA), 432 to 433 (QA), 434 to 435 (QA), 436 to 437 (QA), 438 to 439 (QA), 440 to 441 (QA), and 442 to 443 (QA). The interval 422–481 (QAQAQAQAQAQAQAQAQAQAQAAQAAQAQAQAQAQAQAQAQAQAQAQAQAQAQAQAQAQA) is 30 X 2 AA approximate tandem repeats of Q-A. Residues 444–445 (AQ) form a 12; approximate repeat. A 13; approximate repeat occupies 446–447 (AA). Repeat copies occupy residues 448–449 (QA), 450–451 (QA), 452–453 (QA), 454–455 (QA), 456–457 (QA), 458–459 (QA), 460–461 (QA), 462–463 (QA), 464–465 (QA), 466–467 (QA), 468–469 (QA), 470–471 (QA), 472–473 (QA), 474–475 (QA), 476–477 (QA), 478–479 (QA), and 480–481 (QA). A compositionally biased stretch (low complexity) spans 476-497 (QAQAQAHAQHQPSQQPQQAQQQ). Disordered regions lie at residues 476–505 (QAQA…HGLT) and 692–712 (QQQQ…YSAM). 5 positions are modified to phosphoserine: serine 736, serine 752, serine 783, serine 785, and serine 789. Residues 744-836 (PVSAAATPSL…KTVQSPMGAQ (93 aa)) form a disordered region. Polar residues predominate over residues 749-836 (ATPSLNKTIN…KTVQSPMGAQ (88 aa)). A Phosphothreonine modification is found at threonine 793. Residues serine 831, serine 1003, serine 1008, serine 1018, and serine 1034 each carry the phosphoserine modification. Residues 1026-1055 (DSKKIKVDSPDDPFMTKSGATTSEKQEVTN) are disordered.

It belongs to the Mediator complex subunit 15 family. As to quaternary structure, component of the Mediator complex, which is composed of at least 21 subunits that form three structurally distinct submodules. The Mediator head module contains MED6, MED8, MED11, SRB4/MED17, SRB5/MED18, ROX3/MED19, SRB2/MED20 and SRB6/MED22, the middle module contains MED1, MED4, NUT1/MED5, MED7, CSE2/MED9, NUT2/MED10, SRB7/MED21 and SOH1/MED31, and the tail module contains MED2, PGD1/MED3, RGR1/MED14, GAL11/MED15 and SIN4/MED16. The head and the middle modules interact directly with RNA polymerase II, whereas the elongated tail module interacts with gene-specific regulatory proteins. GAL11/MED15 interacts with the activator GAL4; the interaction is direct. GAL11/MED15 interacts (via multiple regions) with the activator GCN4; the interaction is direct.

The protein resides in the nucleus. Component of the Mediator complex, a coactivator involved in the regulated transcription of nearly all RNA polymerase II-dependent genes. Mediator functions as a bridge to convey information from gene-specific regulatory proteins to the basal RNA polymerase II transcription machinery. The Mediator complex, having a compact conformation in its free form, is recruited to promoters by direct interactions with regulatory proteins and serves for the assembly of a functional pre-initiation complex with RNA polymerase II and the general transcription factors. The Mediator complex unfolds to an extended conformation and partially surrounds RNA polymerase II, specifically interacting with the unphosphorylated form of the C-terminal domain (CTD) of RNA polymerase II. The Mediator complex dissociates from the RNA polymerase II holoenzyme and stays at the promoter when transcriptional elongation begins. It has an important role in the negative regulation of Ty transcription. This is Mediator of RNA polymerase II transcription subunit 15 from Saccharomyces cerevisiae (strain ATCC 204508 / S288c) (Baker's yeast).